We begin with the raw amino-acid sequence, 166 residues long: Large ribosomal subunit protein uL10 (166 aa).

Belongs to the universal ribosomal protein uL10 family. Part of the ribosomal stalk of the 50S ribosomal subunit. The N-terminus interacts with L11 and the large rRNA to form the base of the stalk. The C-terminus forms an elongated spine to which L12 dimers bind in a sequential fashion forming a multimeric L10(L12)X complex.

In terms of biological role, forms part of the ribosomal stalk, playing a central role in the interaction of the ribosome with GTP-bound translation factors. This is Large ribosomal subunit protein uL10 from Pseudomonas syringae pv. tomato (strain ATCC BAA-871 / DC3000).